The chain runs to 192 residues: UPF0312 protein YPK_1931 (192 aa).

The signal sequence occupies residues 1–23 (MINKTLLGLSLGALMFTAGSAVA).

It belongs to the UPF0312 family. Type 1 subfamily.

It is found in the periplasm. This Yersinia pseudotuberculosis serotype O:3 (strain YPIII) protein is UPF0312 protein YPK_1931.